The primary structure comprises 134 residues: Shikimate kinase (134 aa).

Belongs to the shikimate kinase family.

The protein resides in the cytoplasm. It carries out the reaction shikimate + ATP = 3-phosphoshikimate + ADP + H(+). Its pathway is metabolic intermediate biosynthesis; chorismate biosynthesis; chorismate from D-erythrose 4-phosphate and phosphoenolpyruvate: step 5/7. The protein is Shikimate kinase (aroK) of Neisseria gonorrhoeae.